Consider the following 1943-residue polypeptide: Sickle tail protein homolog (1943 aa).

Disordered stretches follow at residues 1 to 79 (MEEN…KEIL) and 112 to 177 (QERL…RSTN). A compositionally biased stretch (basic and acidic residues) spans 38–47 (AECRRTKERL). Positions 48–62 (SNGNSRGSVSKSSRN) are enriched in polar residues. The residue at position 169 (serine 169) is a Phosphoserine. Phosphotyrosine is present on tyrosine 244. Positions 290 to 331 (ARGDGPGAPRPGSTAHPPHAIPNSPPSTPVPHSMPPSPSRIP) are disordered. Pro residues predominate over residues 308-328 (HAIPNSPPSTPVPHSMPPSPS). Serine 357 is a glycosylation site (O-linked (GlcNAc) serine). 2 positions are modified to phosphoserine: serine 361 and serine 365. A Phosphotyrosine modification is found at tyrosine 393. The tract at residues 456–476 (RKYPDSHLPTLGSKTPPASPH) is disordered. Threonine 470 carries the phosphothreonine modification. Serine 474 and serine 526 each carry phosphoserine. 2 coiled-coil regions span residues 557–581 (RETRERMQAMEKQIASLTGLVQSAL) and 644–685 (MSLL…ELEI). Serine 809 is modified (phosphoserine). The disordered stretch occupies residues 848 to 874 (VLKSQEEAAHTSGQPFHSTGAPGDAKS). A coiled-coil region spans residues 957 to 985 (SAKNRAVSIEKAEKKWEEKRQNLDHYNGK). Disordered stretches follow at residues 1003–1230 (PNLE…SDAS), 1305–1329 (KTKEMEKQNTDKCHVSSHTRLTESS), and 1352–1377 (PKEARHANVNPNEDGESSSSSPTEEN). Serine 1027, serine 1030, serine 1033, and serine 1044 each carry phosphoserine. Over residues 1044-1053 (SPPPPPPPPR) the composition is skewed to pro residues. 3 stretches are compositionally biased toward basic and acidic residues: residues 1155–1167 (EPSRADSHVKDTR), 1174–1192 (PKEKKNLEFFHEDVRKSDV), and 1305–1318 (KTKEMEKQNTDKCH). Positions 1368-1377 (SSSSSPTEEN) are enriched in polar residues. A Phosphoserine modification is found at serine 1461. Positions 1464 to 1490 (FEECDEELERMMMEEKIEEEEEEENGD) form a coiled coil. 3 disordered regions span residues 1481–1572 (EEEE…PKKK), 1606–1660 (EEEE…EIRK), and 1677–1943 (ENTI…KETS). Composition is skewed to polar residues over residues 1491–1501 (SVVQNNNTSQM) and 1512–1533 (RTGQQVETKSQPHSLATETRNP). 2 stretches are compositionally biased toward basic and acidic residues: residues 1539–1548 (NRTELNKFSH) and 1612–1625 (GTLKQHKEAKRFEI). Residues 1643–1653 (QPSIESTSPIS) are compositionally biased toward polar residues. The stretch at 1656–1686 (DEIRKNTYRTLDSLEQTIKQLENTISEMSPK) forms a coiled coil. 2 stretches are compositionally biased toward polar residues: residues 1691–1706 (TSCSSNRDSVASSSHI) and 1731–1747 (IPSASRKGSSGAPQTSR). Serine 1739 is subject to Phosphoserine. Residues 1763 to 1775 (KPGKQSKLQDPRQ) are compositionally biased toward basic and acidic residues. The span at 1806–1825 (SPSSGKSSSLPSSSGDSSNL) shows a compositional bias: low complexity. 2 stretches are compositionally biased toward polar residues: residues 1834–1843 (SIASNPLSPQ) and 1853–1869 (LIPSVSNGSLKFQSLTH). Serine 1841 carries the post-translational modification Phosphoserine. Residues 1892 to 1905 (SFSSSPPSPASSVS) are compositionally biased toward low complexity. Phosphoserine is present on residues serine 1896, serine 1899, and serine 1902. Polar residues predominate over residues 1906 to 1943 (LNQGAKGTRTIHTPSLTSYKAQNGSSSKATPSTAKETS).

Interacts with CPNE4 (via VWFA domain).

The protein resides in the cytoplasm. The protein localises to the cytoskeleton. It is found in the microtubule organizing center. It localises to the centrosome. Required for normal development of intervertebral disks. This Homo sapiens (Human) protein is Sickle tail protein homolog (KIAA1217).